We begin with the raw amino-acid sequence, 249 residues long: tRNA pseudouridine synthase A (249 aa).

The active-site Nucleophile is aspartate 52. Tyrosine 111 provides a ligand contact to substrate.

Belongs to the tRNA pseudouridine synthase TruA family. As to quaternary structure, homodimer.

The catalysed reaction is uridine(38/39/40) in tRNA = pseudouridine(38/39/40) in tRNA. Its function is as follows. Formation of pseudouridine at positions 38, 39 and 40 in the anticodon stem and loop of transfer RNAs. This is tRNA pseudouridine synthase A from Brachyspira hyodysenteriae (strain ATCC 49526 / WA1).